The following is a 376-amino-acid chain: N-acetyldiaminopimelate deacetylase (376 aa).

Asp-70 is a catalytic residue. Glu-129 functions as the Proton acceptor in the catalytic mechanism.

It belongs to the peptidase M20A family. N-acetyldiaminopimelate deacetylase subfamily.

It catalyses the reaction N-acetyl-(2S,6S)-2,6-diaminopimelate + H2O = (2S,6S)-2,6-diaminopimelate + acetate. It functions in the pathway amino-acid biosynthesis; L-lysine biosynthesis via DAP pathway; LL-2,6-diaminopimelate from (S)-tetrahydrodipicolinate (acetylase route): step 3/3. Catalyzes the conversion of N-acetyl-diaminopimelate to diaminopimelate and acetate. The sequence is that of N-acetyldiaminopimelate deacetylase from Geobacillus sp. (strain WCH70).